An 89-amino-acid polypeptide reads, in one-letter code: Small ribosomal subunit protein uS15 (89 aa).

The protein belongs to the universal ribosomal protein uS15 family. In terms of assembly, part of the 30S ribosomal subunit. Forms a bridge to the 50S subunit in the 70S ribosome, contacting the 23S rRNA.

One of the primary rRNA binding proteins, it binds directly to 16S rRNA where it helps nucleate assembly of the platform of the 30S subunit by binding and bridging several RNA helices of the 16S rRNA. Functionally, forms an intersubunit bridge (bridge B4) with the 23S rRNA of the 50S subunit in the ribosome. This is Small ribosomal subunit protein uS15 from Acholeplasma laidlawii (strain PG-8A).